Reading from the N-terminus, the 701-residue chain is F-box/LRR-repeat protein 17 (701 aa).

A compositionally biased stretch (basic and acidic residues) spans 1–11 (MGHLLSKEPRN). Disordered stretches follow at residues 1-20 (MGHL…RPRC), 72-94 (APAG…YAAA), and 227-300 (GGGG…DADC). Gly residues predominate over residues 227 to 237 (GGGGGPAGGGA). Residues 252-264 (EQPPQPLCPPPSS) are compositionally biased toward pro residues. The F-box domain maps to 318–365 (TPDINQLPPSILLKIFSNLSLDERCLSASLVCKYWRDLCLDFQFWKQL).

Belongs to the FBXL17 family. In terms of assembly, part of the SCF (SKP1-CUL1-F-box) E3 ubiquitin-protein ligase complex SCF(FBXL17) composed of CUL1, SKP1, RBX1 and FBXL17. Interacts with BTB domain-containing proteins such as KLHL12, BCL6 and BACH1; specifically recognizes and binds a conserved degron of non-consecutive residues present at the interface of BTB dimers of aberrant composition. Interacts with SUFU. Interacts with PRMT1.

The protein resides in the cytoplasm. It is found in the nucleus. Functionally, substrate-recognition component of the SCF(FBXL17) E3 ubiquitin ligase complex, a key component of a quality control pathway required to ensure functional dimerization of BTB domain-containing proteins (dimerization quality control, DQC). FBXL17 specifically recognizes and binds a conserved degron of non-consecutive residues present at the interface of BTB dimers of aberrant composition: aberrant BTB dimer are then ubiquitinated by the SCF(FBXL17) complex and degraded by the proteasome. The ability of the SCF(FBXL17) complex to eliminate compromised BTB dimers is required for the differentiation and survival of neural crest and neuronal cells. The SCF(FBXL17) complex mediates ubiquitination and degradation of BACH1. The SCF(FBXL17) complex is also involved in the regulation of the hedgehog/smoothened (Hh) signaling pathway by mediating the ubiquitination and degradation of SUFU, allowing the release of GLI1 from SUFU for proper Hh signal transduction. The SCF(FBXL17) complex mediates ubiquitination and degradation of PRMT1. The chain is F-box/LRR-repeat protein 17 from Homo sapiens (Human).